A 471-amino-acid polypeptide reads, in one-letter code: uncharacterized protein (471 aa).

The next 11 membrane-spanning stretches (helical) occupy residues 15-35 (LWGP…TILL), 66-86 (PLQA…IVGV), 89-109 (AIMF…LFAM), 147-167 (WLGV…IMVQ), 179-199 (FSFN…LVVI), 210-230 (EFVV…IVLM), 237-257 (AFFS…GGFA), 303-323 (VIGI…IVLA), 353-373 (GYFV…VVIF), 386-406 (LAGH…AAGG), and 410-430 (IWGV…IALL).

Belongs to the alanine or glycine:cation symporter (AGCS) (TC 2.A.25) family.

The protein resides in the cell membrane. This is an uncharacterized protein from Bacillus subtilis (strain 168).